The sequence spans 615 residues: MTCGFQKLFSVEEDFEDEDFLSALENAENHVVSALPRDAGCLRPVSSRPQETVQTQSSRPVPSYPTSNQSVPRLCLPPSSMRENAKAPLSTGVMSLRPASISSSSLSSQQRMTGAKVFQESSGPQPSAAHSGYIFESHQQGIGDFEAPDQDDLDKALASMEFEGAGLELEADSGATQILPAKHCEDPVLAKKARVADLSGSLRKEPMVHCRNPWPSLRPTSATGSLPVPATSCVSTSQQRGSPAPAPQYLPVAGRTIRSSPQNYGPGQPLQSPRAWSSGKPRFSGPQRPHGSSAAFCQGPLSSRAPVSSVESPVSTPRNTSTPVTQPALQTPVVTNHLVQLVTATNRTPQQPSRPSIRAKTRRFPGPAGLLPHQHSGENLEEIMVSTPQTPTHGALAKFQTEIATSSQGSVEEDFGQGPWLTMKSALGLDEGDPTCFLYTYSIVMVLRKAALKQLPRNKVPNMAVMIKSLTRSTMDASVVFKDPTGEMLGTVHRVLLETHQSELRPGSVLLLKQIGVFSPSLRNHYLNVTPNNLVHIYSLDSGDGDFLEPPQPLPKDLGNSHGSLQPDVAAEPTRGLRTAQNPAVAFPEEELSEADDLDGLLSELPEDFFCEPSS.

Disordered regions lie at residues 42–75 (LRPVSSRPQETVQTQSSRPVPSYPTSNQSVPRLC), 213–326 (PWPS…PVTQ), and 546–590 (DFLE…FPEE). Ser47 carries the phosphoserine modification. Composition is skewed to polar residues over residues 47–71 (SRPQETVQTQSSRPVPSYPTSNQSV), 232–241 (SCVSTSQQRG), and 257–275 (IRSSPQNYGPGQPLQSPRA). Over residues 302–317 (SSRAPVSSVESPVSTP) the composition is skewed to low complexity.

In terms of assembly, interacts with MCM8; this interaction is necessary for MCM8-MCM9 helicase complex recruitment to DNA damage sites. Interacts with RPA1; this interaction associates HROB with the RPA complex.

It is found in the nucleus. The protein localises to the chromosome. In terms of biological role, DNA-binding protein involved in homologous recombination that acts by recruiting the MCM8-MCM9 helicase complex to sites of DNA damage to promote DNA repair synthesis. This chain is Homologous recombination OB-fold protein, found in Mus musculus (Mouse).